The following is a 398-amino-acid chain: MKVLVINCGSSSLKYQLIDMTTEDALAEGLVERIGINGSILTQKVKGREKYIVEQPLKDHQDAIELVLKSLIDGNHGVIKSMDEISAVGHRVVHGGEKYSKSVLVNDEVMKNIEECIKLAPLHNPPNIIGIKACEELMPNTPMVCVFDTAFHQTMSEKAYMYPLPYEYYTEDHIRKYGFHGTSHKYVANKVAELMKKDASELKTVTCHLGNGVSITAVDGGKSIDTTMGFTPLAGTIMGSRCGDIDPAIVTYLIKEKGYSADEVNDILNKKSGILGVSGVGTDFRDIRSAIGENNKRAILATDIFGYQIKKQIGAYAVAMGGLDTIVFTAGIGEHAPEVRIRALTGLEFIGIELDEEKNNSHDIGEGLLISKESSKVKVYVIPTNEELMIAKETLALV.

Residue Asn7 coordinates Mg(2+). ATP is bound at residue Lys14. Position 91 (Arg91) interacts with substrate. Asp148 functions as the Proton donor/acceptor in the catalytic mechanism. ATP contacts are provided by residues 208–212 (HLGNG), 283–285 (DFR), and 331–335 (GIGEH). Position 386 (Glu386) interacts with Mg(2+).

Belongs to the acetokinase family. As to quaternary structure, homodimer. The cofactor is Mg(2+). Mn(2+) serves as cofactor.

Its subcellular location is the cytoplasm. It carries out the reaction acetate + ATP = acetyl phosphate + ADP. It functions in the pathway metabolic intermediate biosynthesis; acetyl-CoA biosynthesis; acetyl-CoA from acetate: step 1/2. Catalyzes the formation of acetyl phosphate from acetate and ATP. Can also catalyze the reverse reaction. This Clostridium botulinum (strain Eklund 17B / Type B) protein is Acetate kinase.